The chain runs to 263 residues: Small ribosomal subunit protein eS1 (263 aa).

The segment at 235–263 (HGEGGGGKGEAGDKSERPEGYEPPVQESV) is disordered. Basic and acidic residues predominate over residues 244–254 (EAGDKSERPEG).

It belongs to the eukaryotic ribosomal protein eS1 family. In terms of assembly, component of the small ribosomal subunit. Mature ribosomes consist of a small (40S) and a large (60S) subunit. The 40S subunit contains about 33 different proteins and 1 molecule of RNA (18S). The 60S subunit contains about 49 different proteins and 3 molecules of RNA (28S, 5.8S and 5S).

Its subcellular location is the cytoplasm. This chain is Small ribosomal subunit protein eS1, found in Bombyx mori (Silk moth).